We begin with the raw amino-acid sequence, 241 residues long: Endonuclease NucS (241 aa).

It belongs to the NucS endonuclease family.

The protein resides in the cytoplasm. In terms of biological role, cleaves both 3' and 5' ssDNA extremities of branched DNA structures. The polypeptide is Endonuclease NucS (Corynebacterium jeikeium (strain K411)).